Reading from the N-terminus, the 545-residue chain is Chaperonin GroEL 2 (545 aa).

ATP contacts are provided by residues 30 to 33, Lys51, 87 to 91, Gly415, 479 to 481, and Asp495; these read TLGP, DGTTT, and NAA.

It belongs to the chaperonin (HSP60) family. As to quaternary structure, forms a cylinder of 14 subunits composed of two heptameric rings stacked back-to-back. Interacts with the co-chaperonin GroES.

The protein localises to the cytoplasm. The catalysed reaction is ATP + H2O + a folded polypeptide = ADP + phosphate + an unfolded polypeptide.. Its function is as follows. Together with its co-chaperonin GroES, plays an essential role in assisting protein folding. The GroEL-GroES system forms a nano-cage that allows encapsulation of the non-native substrate proteins and provides a physical environment optimized to promote and accelerate protein folding. The polypeptide is Chaperonin GroEL 2 (Escherichia coli O1:K1 / APEC).